A 256-amino-acid chain; its full sequence is Dihydromonacolin L-[lovastatin nonaketide synthase] thioesterase (256 aa).

Catalysis depends on charge relay system residues serine 122, aspartate 201, and histidine 229.

It belongs to the LovG family.

It catalyses the reaction dihydromonacolin L-[lovastatin nonaketide synthase] + H2O = holo-[lovastatin nonaketide synthase] + dihydromonacolin L carboxylate + H(+). Its pathway is polyketide biosynthesis; lovastatin biosynthesis. Esterase; part of the gene cluster that mediates the biosynthesis of lovastatin (also known as mevinolin, mevacor or monacolin K), a hypolipidemic inhibitor of (3S)-hydroxymethylglutaryl-coenzyme A (HMG-CoA) reductase (HMGR). The first step in the biosynthesis of lovastatin is the production of dihydromonacolin L acid by the lovastatin nonaketide synthase lovB and the trans-acting enoyl reductase lovC via condensation of one acetyl-CoA unit and 8 malonyl-CoA units. Dihydromonacolin L acid is released from lovB by the thioesterase lovG. Next, dihydromonacolin L acid is oxidized by the dihydromonacolin L monooxygenase lovA twice to form monacolin J acid. The 2-methylbutyrate moiety of lovastatin is synthesized by the lovastatin diketide synthase lovF via condensation of one acetyl-CoA unit and one malonyl-CoA unit. Finally, the covalent attachment of this moiety to monacolin J acid is catalyzed by the transesterase lovD to yield lovastatin. LovD has broad substrate specificity and can also convert monacolin J to simvastatin using alpha-dimethylbutanoyl-S-methyl-3-mercaptopropionate (DMB-S-MMP) as the thioester acyl donor, and can also catalyze the reverse reaction and function as hydrolase in vitro. LovD has much higher activity with LovF-bound 2-methylbutanoate than with free diketide substrates. Its function is as follows. Esterase that catalyzes the release of covalently bound dihydromonacolin L from LovB during lovastatin biosynthesis. The sequence is that of Dihydromonacolin L-[lovastatin nonaketide synthase] thioesterase from Aspergillus terreus.